A 294-amino-acid polypeptide reads, in one-letter code: Cytidine deaminase (294 aa).

CMP/dCMP-type deaminase domains are found at residues 48-168 and 187-294; these read DDNT…FGPN and ETTD…YYTF. 89–91 contacts substrate; it reads NME. Position 102 (H102) interacts with Zn(2+). The active-site Proton donor is E104. C129 and C132 together coordinate Zn(2+).

It belongs to the cytidine and deoxycytidylate deaminase family. As to quaternary structure, homodimer. Zn(2+) serves as cofactor.

The enzyme catalyses cytidine + H2O + H(+) = uridine + NH4(+). It carries out the reaction 2'-deoxycytidine + H2O + H(+) = 2'-deoxyuridine + NH4(+). Functionally, this enzyme scavenges exogenous and endogenous cytidine and 2'-deoxycytidine for UMP synthesis. The sequence is that of Cytidine deaminase from Photorhabdus laumondii subsp. laumondii (strain DSM 15139 / CIP 105565 / TT01) (Photorhabdus luminescens subsp. laumondii).